Reading from the N-terminus, the 330-residue chain is Ketol-acid reductoisomerase (NADP(+)) (330 aa).

The region spanning 2-182 (ARMYYDEDAN…GGTRAGVLET (181 aa)) is the KARI N-terminal Rossmann domain. Residues 25–28 (YGSQ), S51, S53, and 83–86 (DEVQ) each bind NADP(+). H108 is a catalytic residue. G134 contributes to the NADP(+) binding site. The KARI C-terminal knotted domain maps to 183 to 328 (TFREETETDL…QDLRAMMSWL (146 aa)). Mg(2+) contacts are provided by D191, E195, E227, and E231. Residue S252 participates in substrate binding.

It belongs to the ketol-acid reductoisomerase family. Mg(2+) serves as cofactor.

The enzyme catalyses (2R)-2,3-dihydroxy-3-methylbutanoate + NADP(+) = (2S)-2-acetolactate + NADPH + H(+). The catalysed reaction is (2R,3R)-2,3-dihydroxy-3-methylpentanoate + NADP(+) = (S)-2-ethyl-2-hydroxy-3-oxobutanoate + NADPH + H(+). The protein operates within amino-acid biosynthesis; L-isoleucine biosynthesis; L-isoleucine from 2-oxobutanoate: step 2/4. It functions in the pathway amino-acid biosynthesis; L-valine biosynthesis; L-valine from pyruvate: step 2/4. In terms of biological role, involved in the biosynthesis of branched-chain amino acids (BCAA). Catalyzes an alkyl-migration followed by a ketol-acid reduction of (S)-2-acetolactate (S2AL) to yield (R)-2,3-dihydroxy-isovalerate. In the isomerase reaction, S2AL is rearranged via a Mg-dependent methyl migration to produce 3-hydroxy-3-methyl-2-ketobutyrate (HMKB). In the reductase reaction, this 2-ketoacid undergoes a metal-dependent reduction by NADPH to yield (R)-2,3-dihydroxy-isovalerate. The chain is Ketol-acid reductoisomerase (NADP(+)) from Microcystis aeruginosa (strain NIES-843 / IAM M-2473).